We begin with the raw amino-acid sequence, 214 residues long: Thymidylate kinase (214 aa).

10–17 (GPDGAGKT) lines the ATP pocket.

The protein belongs to the thymidylate kinase family.

It carries out the reaction dTMP + ATP = dTDP + ADP. Phosphorylation of dTMP to form dTDP in both de novo and salvage pathways of dTTP synthesis. This is Thymidylate kinase from Limosilactobacillus fermentum (strain NBRC 3956 / LMG 18251) (Lactobacillus fermentum).